Here is a 145-residue protein sequence, read N- to C-terminus: LWLWPYLFFIEAVPIRKVQDDTKTLIKTIVTRINDISHTQSVSSKQRVTGLDFIPGLHPVLSLSKMDQTLAIYQQILTSLPSRNVIQISNDLENLRDLLHLLASSKSCPLPQARGLETLASLGGVLEASLLLHRGGSPEQAAGVS.

Positions 1-12 (LWLWPYLFFIEA) are cleaved as a signal peptide.

The protein belongs to the leptin family.

The protein localises to the secreted. In terms of biological role, key player in the regulation of energy balance and body weight control. Once released into the circulation, has central and peripheral effects by binding LEPR, found in many tissues, which results in the activation of several major signaling pathways. In the hypothalamus, acts as an appetite-regulating factor that induces a decrease in food intake and an increase in energy consumption by inducing anorexinogenic factors and suppressing orexigenic neuropeptides, also regulates bone mass and secretion of hypothalamo-pituitary-adrenal hormones. In the periphery, increases basal metabolism, influences reproductive function, regulates pancreatic beta-cell function and insulin secretion, is pro-angiogenic for endothelial cell and affects innate and adaptive immunity. In the arcuate nucleus of the hypothalamus, activates by depolarization POMC neurons inducing FOS and SOCS3 expression to release anorexigenic peptides and inhibits by hyperpolarization NPY neurons inducing SOCS3 with a consequent reduction on release of orexigenic peptides. In addition to its known satiety inducing effect, has a modulatory role in nutrient absorption. In the intestine, reduces glucose absorption by enterocytes by activating PKC and leading to a sequential activation of p38, PI3K and ERK signaling pathways which exerts an inhibitory effect on glucose absorption. Acts as a growth factor on certain tissues, through the activation of different signaling pathways increases expression of genes involved in cell cycle regulation such as CCND1, via JAK2-STAT3 pathway, or VEGFA, via MAPK1/3 and PI3K-AKT1 pathways. May also play an apoptotic role via JAK2-STAT3 pathway and up-regulation of BIRC5 expression. Pro-angiogenic, has mitogenic activity on vascular endothelial cells and plays a role in matrix remodeling by regulating the expression of matrix metalloproteinases (MMPs) and tissue inhibitors of metalloproteinases (TIMPs). In innate immunity, modulates the activity and function of neutrophils by increasing chemotaxis and the secretion of oxygen radicals. Increases phagocytosis by macrophages and enhances secretion of pro-inflammatory mediators. Increases cytotoxic ability of NK cells. Plays a pro-inflammatory role, in synergy with IL1B, by inducing NOS2 which promotes the production of IL6, IL8 and Prostaglandin E2, through a signaling pathway that involves JAK2, PI3K, MAP2K1/MEK1 and MAPK14/p38. In adaptive immunity, promotes the switch of memory T-cells towards T helper-1 cell immune responses. Increases CD4(+)CD25(-) T-cell proliferation and reduces autophagy during TCR (T-cell receptor) stimulation, through MTOR signaling pathway activation and BCL2 up-regulation. This is Leptin (LEP) from Equus caballus (Horse).